Here is an 88-residue protein sequence, read N- to C-terminus: Large ribosomal subunit protein bL27 (88 aa).

The disordered stretch occupies residues 1-22 (MAHKKGASSSRNGRDSNAQRLG). Positions 7–19 (ASSSRNGRDSNAQ) are enriched in polar residues.

It belongs to the bacterial ribosomal protein bL27 family.

The chain is Large ribosomal subunit protein bL27 from Mycolicibacterium gilvum (strain PYR-GCK) (Mycobacterium gilvum (strain PYR-GCK)).